A 245-amino-acid chain; its full sequence is Eukaryotic translation initiation factor 6 (245 aa).

It belongs to the eIF-6 family. In terms of assembly, monomer. Associates with the 60S ribosomal subunit.

The protein resides in the cytoplasm. Its subcellular location is the nucleus. It is found in the nucleolus. Binds to the 60S ribosomal subunit and prevents its association with the 40S ribosomal subunit to form the 80S initiation complex in the cytoplasm. May also be involved in ribosome biogenesis. The polypeptide is Eukaryotic translation initiation factor 6 (eif6) (Danio rerio (Zebrafish)).